Consider the following 205-residue polypeptide: Probable molybdenum cofactor guanylyltransferase (205 aa).

GTP is bound by residues 9-11 (LAG), lysine 21, aspartate 66, and aspartate 95. A Mg(2+)-binding site is contributed by aspartate 95.

It belongs to the MobA family. It depends on Mg(2+) as a cofactor.

The protein resides in the cytoplasm. It catalyses the reaction Mo-molybdopterin + GTP + H(+) = Mo-molybdopterin guanine dinucleotide + diphosphate. Transfers a GMP moiety from GTP to Mo-molybdopterin (Mo-MPT) cofactor (Moco or molybdenum cofactor) to form Mo-molybdopterin guanine dinucleotide (Mo-MGD) cofactor. This Pelotomaculum thermopropionicum (strain DSM 13744 / JCM 10971 / SI) protein is Probable molybdenum cofactor guanylyltransferase.